The chain runs to 251 residues: tRNA (guanine-N(1)-)-methyltransferase (251 aa).

Residues G113 and 133-138 (IGDYVL) each bind S-adenosyl-L-methionine.

Belongs to the RNA methyltransferase TrmD family. In terms of assembly, homodimer.

The protein resides in the cytoplasm. It catalyses the reaction guanosine(37) in tRNA + S-adenosyl-L-methionine = N(1)-methylguanosine(37) in tRNA + S-adenosyl-L-homocysteine + H(+). Its function is as follows. Specifically methylates guanosine-37 in various tRNAs. The sequence is that of tRNA (guanine-N(1)-)-methyltransferase from Pectobacterium carotovorum subsp. carotovorum (strain PC1).